Consider the following 358-residue polypeptide: Spermatogenesis-associated protein 22 (358 aa).

4 stretches are compositionally biased toward polar residues: residues 1 to 12 (MKRNLNESSARS), 30 to 51 (QPLTSNPLQNDPGVSTVSDSYG), 81 to 121 (PASA…TSLR), and 150 to 159 (QQQKQFQTPE). 3 disordered regions span residues 1 to 51 (MKRN…DSYG), 81 to 122 (PASA…SLRT), and 150 to 172 (QQQKQFQTPEFPNLPGHKEAEVP).

As to quaternary structure, component of a multiprotein complex with MEIOB and RPA2. Interacts with MEIOB. Interacts with the complex BRME1:HSF2BP:BRCA2. In terms of tissue distribution, specifically expressed in gonadal germ cells, when male and female germ cells progress through prophase of meiosis I.

It is found in the chromosome. Meiosis-specific protein required for homologous recombination in meiosis I. This is Spermatogenesis-associated protein 22 from Mus musculus (Mouse).